We begin with the raw amino-acid sequence, 98 residues long: Homeobox protein SMOX-4 (98 aa).

A DNA-binding region (homeobox) is located at residues 37–96; it reads SFRNRTAFTDYQLICLEREFSHIQYLSRIDRIHLAQNLNLTEKQVKIWFQNRRVRWRKRN.

Its subcellular location is the nucleus. This chain is Homeobox protein SMOX-4 (SMOX-4), found in Schistosoma mansoni (Blood fluke).